The chain runs to 146 residues: MORN repeat-containing protein 4 (146 aa).

MORN repeat units follow at residues 16 to 38 (YRGE…DGGT), 39 to 61 (YLGH…DGSR), 62 to 84 (YEGE…DNMT), and 85 to 107 (FEGE…DGSH).

In terms of assembly, interacts with MYO3A.

The protein localises to the cytoplasm. Its subcellular location is the cell projection. The protein resides in the filopodium tip. It localises to the stereocilium. In terms of biological role, plays a role in promoting axonal degeneration following neuronal injury by toxic insult or trauma. This is MORN repeat-containing protein 4 (Morn4) from Rattus norvegicus (Rat).